The primary structure comprises 193 residues: Ion-translocating oxidoreductase complex subunit A (193 aa).

The next 6 membrane-spanning stretches (helical) occupy residues 5–25, 39–59, 62–82, 102–122, 134–154, and 171–191; these read ALLF…FLGL, IGMG…SWLI, FILV…LVLA, LLGI…VVLL, TIYG…FAAI, and SIAL…TGLV.

The protein belongs to the NqrDE/RnfAE family. In terms of assembly, the complex is composed of six subunits: RnfA, RnfB, RnfC, RnfD, RnfE and RnfG.

The protein resides in the cell inner membrane. Functionally, part of a membrane-bound complex that couples electron transfer with translocation of ions across the membrane. In Pectobacterium atrosepticum (strain SCRI 1043 / ATCC BAA-672) (Erwinia carotovora subsp. atroseptica), this protein is Ion-translocating oxidoreductase complex subunit A.